We begin with the raw amino-acid sequence, 311 residues long: Mediator of RNA polymerase II transcription subunit 27 (311 aa).

At serine 132 the chain carries Phosphoserine. Lysine 134 bears the N6-methyllysine mark.

Belongs to the Mediator complex subunit 27 family. Component of the Mediator complex, which is composed of MED1, MED4, MED6, MED7, MED8, MED9, MED10, MED11, MED12, MED13, MED13L, MED14, MED15, MED16, MED17, MED18, MED19, MED20, MED21, MED22, MED23, MED24, MED25, MED26, MED27, MED29, MED30, MED31, CCNC, CDK8 and CDC2L6/CDK11. The MED12, MED13, CCNC and CDK8 subunits form a distinct module termed the CDK8 module. Mediator containing the CDK8 module is less active than Mediator lacking this module in supporting transcriptional activation. Individual preparations of the Mediator complex lacking one or more distinct subunits have been variously termed ARC, CRSP, DRIP, PC2, SMCC and TRAP.

Its subcellular location is the nucleus. Functionally, component of the Mediator complex, a coactivator involved in the regulated transcription of nearly all RNA polymerase II-dependent genes. Mediator functions as a bridge to convey information from gene-specific regulatory proteins to the basal RNA polymerase II transcription machinery. Mediator is recruited to promoters by direct interactions with regulatory proteins and serves as a scaffold for the assembly of a functional preinitiation complex with RNA polymerase II and the general transcription factors. The chain is Mediator of RNA polymerase II transcription subunit 27 (MED27) from Bos taurus (Bovine).